The following is a 245-amino-acid chain: 8-amino-3,8-dideoxy-manno-octulosonate cytidylyltransferase (245 aa).

Belongs to the KdsB family.

It is found in the cytoplasm. It catalyses the reaction 8-amino-3,8-dideoxy-alpha-D-manno-octulosonate + CTP = CMP-8-amino-3,8-dideoxy-alpha-D-manno-oct-2-ulosonate + diphosphate. Its pathway is bacterial outer membrane biogenesis; lipopolysaccharide biosynthesis. Its function is as follows. Activates KDO8N (a required 8-carbon sugar) for incorporation into bacterial lipopolysaccharide in the Shewanella genus. The polypeptide is 8-amino-3,8-dideoxy-manno-octulosonate cytidylyltransferase (Shewanella baltica (strain OS185)).